A 365-amino-acid polypeptide reads, in one-letter code: MHVTTIFDTVPVNGASPYEVVIGSGLTPLIAERAAGSGATQVALLHQPALAEVAADIDGALQAAGLQVLHLEVPDAESGKTLAVAGECWDKLGAAAFGRRDIIIGLGGGAATDLAGFVAAAWMRGVRVIQVPTTVLGMVDAAVGGKTGINTAAGKNLVGAFHEPDAVFIDLDRLHTLPDEEIIAGSAEIIKTGFIADEEILRLYESDASACLQREIDGSHLPELIARSVRVKGSVVSADLKESNLREILNYGHTFAHAVELREDFQWRHGNAVAVGMMFIANLSYNLGLIDADLLERHRVILDSIGLPTTYQGGVFDELYEGMTRDKKNRDGNIRFVALTAVGEVTRIEGPDRGELIRAYEAISS.

NAD(+) is bound by residues 75 to 80 (DAESGK), 109 to 113 (GAATD), 133 to 134 (TT), lysine 146, and lysine 155. Zn(2+) contacts are provided by glutamate 188, histidine 253, and histidine 269.

The protein belongs to the sugar phosphate cyclases superfamily. Dehydroquinate synthase family. NAD(+) is required as a cofactor. Co(2+) serves as cofactor. The cofactor is Zn(2+).

The protein localises to the cytoplasm. It carries out the reaction 7-phospho-2-dehydro-3-deoxy-D-arabino-heptonate = 3-dehydroquinate + phosphate. It participates in metabolic intermediate biosynthesis; chorismate biosynthesis; chorismate from D-erythrose 4-phosphate and phosphoenolpyruvate: step 2/7. Catalyzes the conversion of 3-deoxy-D-arabino-heptulosonate 7-phosphate (DAHP) to dehydroquinate (DHQ). This chain is 3-dehydroquinate synthase, found in Corynebacterium efficiens (strain DSM 44549 / YS-314 / AJ 12310 / JCM 11189 / NBRC 100395).